Here is a 444-residue protein sequence, read N- to C-terminus: uncharacterized protein (444 aa).

This is an uncharacterized protein from Saccharomyces cerevisiae (strain ATCC 204508 / S288c) (Baker's yeast).